Consider the following 184-residue polypeptide: Der GTPase-activating protein YihI (184 aa).

Residues 1–107 (MNRPVKGAAD…VVAAKPTMSP (107 aa)) form a disordered region. Over residues 21-32 (TREELEREARER) the composition is skewed to basic and acidic residues. Residues 80-95 (SAVAKPKPKSKPSAPV) are compositionally biased toward low complexity.

Belongs to the YihI family. Interacts with Der.

In terms of biological role, a GTPase-activating protein (GAP) that modifies Der/EngA GTPase function. May play a role in ribosome biogenesis. The sequence is that of Der GTPase-activating protein YihI from Pectobacterium carotovorum subsp. carotovorum (strain PC1).